The sequence spans 142 residues: Hemoglobin larval subunit alpha (142 aa).

The Globin domain maps to 2–142 (VLSAEEKALV…VSAVLTSKYR (141 aa)). Histidine 59 lines the O2 pocket. Histidine 88 provides a ligand contact to heme b.

Belongs to the globin family. Heterotetramer of two alpha chains and two beta chains. Red blood cells.

In terms of biological role, involved in oxygen transport from the lung to the various peripheral tissues. This Pleurodeles waltl (Iberian ribbed newt) protein is Hemoglobin larval subunit alpha.